The primary structure comprises 435 residues: Transcription factor gkaF (435 aa).

The segment covering 1–19 (MGRPQRGDTAKERRERQDK) has biased composition (basic and acidic residues). 3 disordered regions span residues 1–40 (MGRP…TVDW), 115–158 (STTA…SSQS), and 231–257 (FSSE…FLAP). Over residues 28–40 (PISQSGLSDTVDW) the composition is skewed to polar residues. Positions 143–158 (SQSSDSSKPSSTSSQS) are enriched in low complexity.

It is found in the nucleus. In terms of biological role, transcription factor; part of the gene cluster that mediates the biosynthesis of GKK1032, fungal natural products containing a macrocyclic para-cyclophane connected to a decahydrofluorene ring system that show potent antitumor activities. The chain is Transcription factor gkaF from Penicillium citrinum.